Here is a 478-residue protein sequence, read N- to C-terminus: ATP-dependent DNA helicase RecQ (478 aa).

Residues 28-202 (IDCLLARRDC…VEGLNLRSPE (175 aa)) enclose the Helicase ATP-binding domain. 41 to 48 (LPTGGGKS) contacts ATP. Residues 142–145 (DEAH) carry the DEAH box motif. One can recognise a Helicase C-terminal domain in the interval 229-380 (QLRRFLLKHL…RAEVLSQQIP (152 aa)). Zn(2+) contacts are provided by Cys-447, Cys-467, Cys-470, and Cys-473.

This sequence belongs to the helicase family. RecQ subfamily. Mg(2+) serves as cofactor. The cofactor is Zn(2+).

The catalysed reaction is Couples ATP hydrolysis with the unwinding of duplex DNA by translocating in the 3'-5' direction.. It carries out the reaction ATP + H2O = ADP + phosphate + H(+). Its function is as follows. An ATP-dependent DNA helicase which unwinds DNA in a 3'-5' direction. The sequence is that of ATP-dependent DNA helicase RecQ from Synechocystis sp. (strain ATCC 27184 / PCC 6803 / Kazusa).